A 373-amino-acid chain; its full sequence is Dual-specificity RNA methyltransferase RlmN (373 aa).

The Proton acceptor role is filled by Glu-94. The Radical SAM core domain occupies Glu-100–Asp-339. The cysteines at positions 107 and 344 are disulfide-linked. The [4Fe-4S] cluster site is built by Cys-114, Cys-118, and Cys-121. S-adenosyl-L-methionine contacts are provided by residues Gly-168–Glu-169, Ser-200, Ser-222–His-224, and Asn-301. Cys-344 functions as the S-methylcysteine intermediate in the catalytic mechanism.

Belongs to the radical SAM superfamily. RlmN family. [4Fe-4S] cluster is required as a cofactor.

It localises to the cytoplasm. It carries out the reaction adenosine(2503) in 23S rRNA + 2 reduced [2Fe-2S]-[ferredoxin] + 2 S-adenosyl-L-methionine = 2-methyladenosine(2503) in 23S rRNA + 5'-deoxyadenosine + L-methionine + 2 oxidized [2Fe-2S]-[ferredoxin] + S-adenosyl-L-homocysteine. It catalyses the reaction adenosine(37) in tRNA + 2 reduced [2Fe-2S]-[ferredoxin] + 2 S-adenosyl-L-methionine = 2-methyladenosine(37) in tRNA + 5'-deoxyadenosine + L-methionine + 2 oxidized [2Fe-2S]-[ferredoxin] + S-adenosyl-L-homocysteine. Functionally, specifically methylates position 2 of adenine 2503 in 23S rRNA and position 2 of adenine 37 in tRNAs. m2A2503 modification seems to play a crucial role in the proofreading step occurring at the peptidyl transferase center and thus would serve to optimize ribosomal fidelity. In Shewanella woodyi (strain ATCC 51908 / MS32), this protein is Dual-specificity RNA methyltransferase RlmN.